The sequence spans 137 residues: Interferon-induced transmembrane protein 3 (137 aa).

Residues methionine 1–histidine 57 lie on the Cytoplasmic side of the membrane. Tyrosine 20 bears the Phosphotyrosine mark. A Glycyl lysine isopeptide (Lys-Gly) (interchain with G-Cter in ubiquitin) cross-link involves residue lysine 24. Tyrosine 27 is modified (phosphotyrosine). The helical intramembrane region spans valine 58–tyrosine 78. The interval tryptophan 60–methionine 93 is interaction with SPP1. Residues cysteine 71 and cysteine 72 are each lipidated (S-palmitoyl cysteine). Over alanine 79–serine 109 the chain is Cytoplasmic. Glycyl lysine isopeptide (Lys-Gly) (interchain with G-Cter in ubiquitin) cross-links involve residues lysine 83, lysine 88, and lysine 104. A lipid anchor (S-palmitoyl cysteine) is attached at cysteine 105. Residues isoleucine 108–proline 133 are interaction with VAPA. The chain crosses the membrane as a helical span at residues serine 110–leucine 130. Residues asparagine 131–threonine 137 lie on the Extracellular side of the membrane.

This sequence belongs to the CD225/Dispanin family. As to quaternary structure, interacts with ATP6V0B. Interacts with CD81. Interacts with SPP1; the interaction reduces OPN expression. Interacts with BRI3. Post-translationally, polyubiquitinated with both 'Lys-48' and 'Lys-63' linkages. Ubiquitination negatively regulates antiviral activity. Lys-24 is the most prevalent ubiquitination site. Phosphorylation at Tyr-20 is required for endosomal and lysosomal location.

It is found in the cell membrane. Its subcellular location is the late endosome membrane. The protein localises to the early endosome membrane. The protein resides in the lysosome membrane. It localises to the cytoplasm. It is found in the perinuclear region. IFN-induced antiviral protein which disrupts intracellular cholesterol homeostasis. Inhibits the entry of viruses to the host cell cytoplasm by preventing viral fusion with cholesterol depleted endosomes. May inactivate new enveloped viruses which buds out of the infected cell, by letting them go out with a cholesterol depleted membrane. Active against multiple viruses. Plays a critical role in the structural stability and function of vacuolar ATPase (v-ATPase). Establishes physical contact with the v-ATPase of endosomes which is critical for proper clathrin localization and is also required for the function of the v-ATPase to lower the pH in phagocytic endosomes thus establishing an antiviral state. The chain is Interferon-induced transmembrane protein 3 from Rattus norvegicus (Rat).